We begin with the raw amino-acid sequence, 206 residues long: Thymidylate kinase (206 aa).

Position 11–18 (11–18) interacts with ATP; the sequence is GIDGAGKT.

Belongs to the thymidylate kinase family.

It carries out the reaction dTMP + ATP = dTDP + ADP. Functionally, phosphorylation of dTMP to form dTDP in both de novo and salvage pathways of dTTP synthesis. This Burkholderia cenocepacia (strain HI2424) protein is Thymidylate kinase.